The sequence spans 366 residues: Neutral protease 2 homolog MGYG_04094 (366 aa).

The first 19 residues, 1 to 19 (MQILAALSAIGALVATATA), serve as a signal peptide directing secretion. Positions 20–188 (AAVPNAPAKQ…NKSRSTIDKR (169 aa)) are excised as a propeptide. 2 disulfide bridges follow: Cys-196/Cys-267 and Cys-274/Cys-292. His-317 contributes to the Zn(2+) binding site. Glu-318 is a catalytic residue. Residues His-321 and Asp-332 each contribute to the Zn(2+) site.

The protein belongs to the peptidase M35 family. Zn(2+) is required as a cofactor.

It is found in the secreted. The enzyme catalyses Preferential cleavage of bonds with hydrophobic residues in P1'. Also 3-Asn-|-Gln-4 and 8-Gly-|-Ser-9 bonds in insulin B chain.. Its function is as follows. Secreted metalloproteinase that allows assimilation of proteinaceous substrates. Shows high activities on basic nuclear substrates such as histone and protamine. May be involved in virulence. In Arthroderma gypseum (strain ATCC MYA-4604 / CBS 118893) (Microsporum gypseum), this protein is Neutral protease 2 homolog MGYG_04094.